Here is a 224-residue protein sequence, read N- to C-terminus: Holliday junction branch migration complex subunit RuvA (224 aa).

The segment at M1 to P64 is domain I. The domain II stretch occupies residues T65–E143. Residues A144–P171 are flexible linker. The segment at S172–G224 is domain III.

Belongs to the RuvA family. In terms of assembly, homotetramer. Forms an RuvA(8)-RuvB(12)-Holliday junction (HJ) complex. HJ DNA is sandwiched between 2 RuvA tetramers; dsDNA enters through RuvA and exits via RuvB. An RuvB hexamer assembles on each DNA strand where it exits the tetramer. Each RuvB hexamer is contacted by two RuvA subunits (via domain III) on 2 adjacent RuvB subunits; this complex drives branch migration. In the full resolvosome a probable DNA-RuvA(4)-RuvB(12)-RuvC(2) complex forms which resolves the HJ.

The protein localises to the cytoplasm. In terms of biological role, the RuvA-RuvB-RuvC complex processes Holliday junction (HJ) DNA during genetic recombination and DNA repair, while the RuvA-RuvB complex plays an important role in the rescue of blocked DNA replication forks via replication fork reversal (RFR). RuvA specifically binds to HJ cruciform DNA, conferring on it an open structure. The RuvB hexamer acts as an ATP-dependent pump, pulling dsDNA into and through the RuvAB complex. HJ branch migration allows RuvC to scan DNA until it finds its consensus sequence, where it cleaves and resolves the cruciform DNA. The polypeptide is Holliday junction branch migration complex subunit RuvA (Dinoroseobacter shibae (strain DSM 16493 / NCIMB 14021 / DFL 12)).